We begin with the raw amino-acid sequence, 459 residues long: ATP synthase subunit beta (459 aa).

148-155 (GGAGVGKT) is an ATP binding site.

It belongs to the ATPase alpha/beta chains family. F-type ATPases have 2 components, CF(1) - the catalytic core - and CF(0) - the membrane proton channel. CF(1) has five subunits: alpha(3), beta(3), gamma(1), delta(1), epsilon(1). CF(0) has three main subunits: a(1), b(2) and c(9-12). The alpha and beta chains form an alternating ring which encloses part of the gamma chain. CF(1) is attached to CF(0) by a central stalk formed by the gamma and epsilon chains, while a peripheral stalk is formed by the delta and b chains.

Its subcellular location is the cell inner membrane. The catalysed reaction is ATP + H2O + 4 H(+)(in) = ADP + phosphate + 5 H(+)(out). Produces ATP from ADP in the presence of a proton gradient across the membrane. The catalytic sites are hosted primarily by the beta subunits. The protein is ATP synthase subunit beta of Hahella chejuensis (strain KCTC 2396).